The primary structure comprises 188 residues: MANYSTNEFKGGLKIMMDGEPSSIIENEMVKPGKGQAFNRVRIRKLISGKVLEKTFKSGESVEGADVMDTDLAYLYTDGEFWHFMNNETFEQIAADEKALGDAGKWLVENDVCTITLWNGNPIVVTPPNFVELEITETDPGLKGDTAGTGGKPATLSTGAVVRVPLFVQIGEVIKVDTRNGEYVSRVK.

Lys-34 carries the post-translational modification N6-(3,6-diaminohexanoyl)-5-hydroxylysine.

The protein belongs to the elongation factor P family. May be beta-lysylated on the epsilon-amino group of Lys-34 by the combined action of EpmA and EpmB, and then hydroxylated on the C5 position of the same residue by EpmC (if this protein is present). Lysylation is critical for the stimulatory effect of EF-P on peptide-bond formation. The lysylation moiety may extend toward the peptidyltransferase center and stabilize the terminal 3-CCA end of the tRNA. Hydroxylation of the C5 position on Lys-34 may allow additional potential stabilizing hydrogen-bond interactions with the P-tRNA.

The protein localises to the cytoplasm. It functions in the pathway protein biosynthesis; polypeptide chain elongation. Involved in peptide bond synthesis. Alleviates ribosome stalling that occurs when 3 or more consecutive Pro residues or the sequence PPG is present in a protein, possibly by augmenting the peptidyl transferase activity of the ribosome. Modification of Lys-34 is required for alleviation. The chain is Elongation factor P from Pseudoalteromonas translucida (strain TAC 125).